Reading from the N-terminus, the 809-residue chain is Zygotic DNA replication licensing factor mcm3 (809 aa).

Residues 297-504 (IFEQLSRSLA…QDREISDHVL (208 aa)) form the MCM domain. An ATP-binding site is contributed by 347-354 (GDPSVAKS). Residues 479-482 (SRFD) carry the Arginine finger motif. A disordered region spans residues 664-741 (KKRRRRDEDS…TDSSAKPGLS (78 aa)). Positions 696 to 705 (AQEGESHDPY) are enriched in basic and acidic residues.

This sequence belongs to the MCM family. As to quaternary structure, component of the mcm2-7 complex (RLF-M). The complex forms a toroidal hexameric ring with the proposed subunit order mcm2-mcm6-mcm4-mcm7-mcm3-mcm5. Component of the CMG helicase complex, composed of the mcm2-7 complex, the GINS complex and cdc45.

It is found in the nucleus. The protein localises to the chromosome. The catalysed reaction is ATP + H2O = ADP + phosphate + H(+). Acts as a component of the MCM2-7 complex (MCM complex) which is the putative replicative helicase essential for 'once per cell cycle' DNA replication initiation and elongation in eukaryotic cells. The active ATPase sites in the MCM2-7 ring are formed through the interaction surfaces of two neighboring subunits such that a critical structure of a conserved arginine finger motif is provided in trans relative to the ATP-binding site of the Walker A box of the adjacent subunit. The six ATPase active sites, however, are likely to contribute differentially to the complex helicase activity. The existence of maternal and zygotic forms of mcm3 and mcm6 suggests that specific forms of mcm2-7 complexes may be used during different stages of development. The protein is Zygotic DNA replication licensing factor mcm3 (zmcm3) of Xenopus tropicalis (Western clawed frog).